The following is a 427-amino-acid chain: Glutamate-1-semialdehyde 2,1-aminomutase (427 aa).

Position 264 is an N6-(pyridoxal phosphate)lysine (K264).

It belongs to the class-III pyridoxal-phosphate-dependent aminotransferase family. HemL subfamily. In terms of assembly, homodimer. The cofactor is pyridoxal 5'-phosphate.

The protein resides in the cytoplasm. It catalyses the reaction (S)-4-amino-5-oxopentanoate = 5-aminolevulinate. Its pathway is porphyrin-containing compound metabolism; protoporphyrin-IX biosynthesis; 5-aminolevulinate from L-glutamyl-tRNA(Glu): step 2/2. The chain is Glutamate-1-semialdehyde 2,1-aminomutase from Clostridium botulinum (strain Eklund 17B / Type B).